A 434-amino-acid chain; its full sequence is Alpha-enolase (434 aa).

Serine 40 is a Mg(2+) binding site. Substrate-binding residues include histidine 158 and glutamate 167. Residue glutamate 210 is the Proton donor of the active site. Mg(2+) is bound by residues aspartate 245, glutamate 293, and aspartate 318. Positions 293 and 318 each coordinate substrate. Lysine 343 (proton acceptor) is an active-site residue. Substrate contacts are provided by residues 370 to 373 and lysine 394; that span reads SHRS.

The protein belongs to the enolase family. As to quaternary structure, homodimer. Mg(2+) serves as cofactor.

The protein localises to the cytoplasm. It carries out the reaction (2R)-2-phosphoglycerate = phosphoenolpyruvate + H2O. It participates in carbohydrate degradation; glycolysis; pyruvate from D-glyceraldehyde 3-phosphate: step 4/5. The polypeptide is Alpha-enolase (Python regius (Ball python)).